A 495-amino-acid chain; its full sequence is UDP-glycosyltransferase 73C13 (495 aa).

His-24 (proton acceptor) is an active-site residue. His-24 is an an anthocyanidin binding site. Catalysis depends on Asp-129, which acts as the Charge relay. Ala-356, Gln-358, His-373, Trp-376, Asn-377, Ser-378, and Glu-381 together coordinate UDP-alpha-D-glucose. Ala-396 is a binding site for an anthocyanidin. Residues Asp-397 and Gln-398 each contribute to the UDP-alpha-D-glucose site.

The protein belongs to the UDP-glycosyltransferase family.

It carries out the reaction oleanolate + UDP-alpha-D-glucose = oleanolate 3-O-beta-D-glucoside + UDP + H(+). Its function is as follows. Catalyzes the transfer of a glucose (Glc) moiety from UDP-Glc to the C-3 position of the oleanane sapogenins oleanolate and hederagenin, and to the C-28 carboxylic group of the lupane sapogenin betulinate. The monoglucosylated hederagenin 3-O-beta-D-glucoside is a feeding deterrent of the yellow-striped flea beetle (Phyllotreta nemorum). The sequence is that of UDP-glycosyltransferase 73C13 from Barbarea vulgaris (Yellow rocket).